Consider the following 396-residue polypeptide: Odorant receptor 49a (396 aa).

Residues 1-6 (MEKLRS) are Cytoplasmic-facing. Residues 7–27 (YEDFIFMANMMFKTLGYDLFH) traverse the membrane as a helical segment. The Extracellular segment spans residues 28-34 (TPKPWWR). A helical membrane pass occupies residues 35 to 55 (YLLVRGYFVLCTISNFYEASM). At 56–70 (VTTRIIEWESLAGSP) the chain is on the cytoplasmic side. A helical transmembrane segment spans residues 71–91 (SKIMRQGLHFFYMLSSQLKFI). At 92-141 (TFMINRKRLLQLSHRLKELYPHKEQNQRKYEVNKYYLSCSTRNVLYVYYF) the chain is on the extracellular side. A helical transmembrane segment spans residues 142-162 (VMVVMALEPLVQSCIMYLIGF). Over 163–209 (GKADFTYKRIFPTRLTFDSEKPLGYVLAYVIDFTYSQFIVNVSLGTD) the chain is Cytoplasmic. Residues 210-230 (LWMMCVSSQISMHLGYLANML) form a helical membrane-spanning segment. Topologically, residues 231–266 (ASIRPSPETEQQDCDFLASIIKRHQLMIRLQKDVNY) are extracellular. Residues 267–287 (VFGLLLASNLFTTSCLLCCMA) form a helical membrane-spanning segment. Topologically, residues 288–296 (YYTVVEGFN) are cytoplasmic. A helical transmembrane segment spans residues 297-317 (WEGISYMMLFASVAAQFYVVS). Over 318–396 (SHGQMLIDLS…FAVIRQTVEK (79 aa)) the chain is Extracellular.

This sequence belongs to the insect chemoreceptor superfamily. Heteromeric odorant receptor channel (TC 1.A.69) family. Or49a subfamily. As to quaternary structure, interacts with Orco. Complexes exist early in the endomembrane system in olfactory sensory neurons (OSNs), coupling these complexes to the conserved ciliary trafficking pathway.

The protein localises to the cell membrane. In terms of biological role, odorant receptor which mediates acceptance or avoidance behavior, depending on its substrates. The odorant receptor repertoire encodes a large collection of odor stimuli that vary widely in identity, intensity, and duration. May form a complex with Orco to form odorant-sensing units, providing sensitive and prolonged odorant signaling and calcium permeability. Involved in the behavioral responses to butanol and 2-heptanone. The sequence is that of Odorant receptor 49a (Or49a) from Drosophila melanogaster (Fruit fly).